A 350-amino-acid chain; its full sequence is 2-oxoglutarate-dependent ethylene/succinate-forming enzyme (350 aa).

The region spanning 166-286 is the Fe2OG dioxygenase domain; sequence GWHHMRVLRF…RFACAYFHEP (121 aa). Fe cation is bound by residues histidine 189 and histidine 268.

This sequence belongs to the iron/ascorbate-dependent oxidoreductase family. Monomer. Fe(2+) is required as a cofactor.

The catalysed reaction is 2-oxoglutarate + O2 + 2 H(+) = ethene + 3 CO2 + H2O. The enzyme catalyses L-arginine + 2-oxoglutarate + O2 = guanidine + L-glutamate 5-semialdehyde + succinate + CO2. Its pathway is alkene biosynthesis; ethylene biosynthesis via 2-oxoglutarate. Simultaneously catalyzes two reactions, namely formation of ethylene and of succinate from 2-oxoglutarate. The polypeptide is 2-oxoglutarate-dependent ethylene/succinate-forming enzyme (efe) (Pseudomonas amygdali pv. sesami (Pseudomonas syringae pv. sesami)).